The sequence spans 210 residues: Prolactin (210 aa).

The signal sequence occupies residues 1-23 (MAEGSRLYFAVTVLMCAFVSING). Disulfide bonds link C69–C183 and C200–C210.

Belongs to the somatotropin/prolactin family. As to expression, pituitary gland.

It is found in the secreted. The sequence is that of Prolactin (prl) from Hypophthalmichthys nobilis (Bighead carp).